We begin with the raw amino-acid sequence, 37 residues long: Photosystem II reaction center protein M (37 aa).

A helical membrane pass occupies residues 7–27 (AFIAVLLFLAVPTAFLLIPYV).

This sequence belongs to the PsbM family. PSII is composed of 1 copy each of membrane proteins PsbA, PsbB, PsbC, PsbD, PsbE, PsbF, PsbH, PsbI, PsbJ, PsbK, PsbL, PsbM, PsbT, PsbX, PsbY, PsbZ, Psb30/Ycf12, at least 3 peripheral proteins of the oxygen-evolving complex and a large number of cofactors. It forms dimeric complexes.

The protein resides in the plastid. The protein localises to the chloroplast thylakoid membrane. Functionally, one of the components of the core complex of photosystem II (PSII). PSII is a light-driven water:plastoquinone oxidoreductase that uses light energy to abstract electrons from H(2)O, generating O(2) and a proton gradient subsequently used for ATP formation. It consists of a core antenna complex that captures photons, and an electron transfer chain that converts photonic excitation into a charge separation. This subunit is found at the monomer-monomer interface. The polypeptide is Photosystem II reaction center protein M (Pinus thunbergii (Japanese black pine)).